Consider the following 119-residue polypeptide: Divalent-cation tolerance protein CutA (119 aa).

Cys23, His90, and His91 together coordinate Cu cation.

The protein belongs to the CutA family. Homotrimer. Requires Cu cation as cofactor.

It localises to the cytoplasm. In terms of biological role, involved in resistance toward heavy metals. This chain is Divalent-cation tolerance protein CutA, found in Yersinia pseudotuberculosis serotype O:1b (strain IP 31758).